Consider the following 267-residue polypeptide: 3-isopropylmalate dehydratase large subunit (267 aa).

The [4Fe-4S] cluster site is built by Cys-146, Cys-206, and Cys-209.

It belongs to the aconitase/IPM isomerase family. LeuC type 1 subfamily. In terms of assembly, heterodimer of LeuC and LeuD. [4Fe-4S] cluster serves as cofactor.

It catalyses the reaction (2R,3S)-3-isopropylmalate = (2S)-2-isopropylmalate. The protein operates within amino-acid biosynthesis; L-leucine biosynthesis; L-leucine from 3-methyl-2-oxobutanoate: step 2/4. Functionally, catalyzes the isomerization between 2-isopropylmalate and 3-isopropylmalate, via the formation of 2-isopropylmaleate. The sequence is that of 3-isopropylmalate dehydratase large subunit (leuC) from Cupriavidus necator (Alcaligenes eutrophus).